A 176-amino-acid chain; its full sequence is MCKKIIWLTIGKIVAPQGLSGKVRINPSSDFPERFIKSGDRWLQYDNEEPQKIQLNSGRQIPGKSIYVVEFQGIDDREKAKALVGKKLLIDSSHRPTLAPGEFHLLDLLGLKVRLKNDHREIGEVTNLTSAGNDLLEVRLLSGKKVLVPFVKEIVPEIKLQEGWLMVCPPPGLFDL.

One can recognise a PRC barrel domain in the interval 100–173; the sequence is PGEFHLLDLL…WLMVCPPPGL (74 aa).

The protein belongs to the RimM family. In terms of assembly, binds ribosomal protein uS19.

The protein localises to the cytoplasm. In terms of biological role, an accessory protein needed during the final step in the assembly of 30S ribosomal subunit, possibly for assembly of the head region. Essential for efficient processing of 16S rRNA. May be needed both before and after RbfA during the maturation of 16S rRNA. It has affinity for free ribosomal 30S subunits but not for 70S ribosomes. This Prochlorococcus marinus (strain SARG / CCMP1375 / SS120) protein is Ribosome maturation factor RimM.